The chain runs to 439 residues: tRNA modification GTPase MnmE (439 aa).

3 residues coordinate (6S)-5-formyl-5,6,7,8-tetrahydrofolate: R26, E88, and R127. The region spanning 220–367 (GARLALIGRP…LRDAIHTALI (148 aa)) is the TrmE-type G domain. Position 230 (N230) interacts with K(+). Residues 230–235 (NAGKSS), 249–255 (TPIPGTT), and 274–277 (DTAG) each bind GTP. S234 is a binding site for Mg(2+). K(+) contacts are provided by T249, I251, and T254. T255 is a binding site for Mg(2+). Residue K439 participates in (6S)-5-formyl-5,6,7,8-tetrahydrofolate binding.

The protein belongs to the TRAFAC class TrmE-Era-EngA-EngB-Septin-like GTPase superfamily. TrmE GTPase family. Homodimer. Heterotetramer of two MnmE and two MnmG subunits. The cofactor is K(+).

The protein resides in the cytoplasm. Functionally, exhibits a very high intrinsic GTPase hydrolysis rate. Involved in the addition of a carboxymethylaminomethyl (cmnm) group at the wobble position (U34) of certain tRNAs, forming tRNA-cmnm(5)s(2)U34. This is tRNA modification GTPase MnmE from Deinococcus geothermalis (strain DSM 11300 / CIP 105573 / AG-3a).